Here is a 312-residue protein sequence, read N- to C-terminus: DNA primase small subunit PriS (312 aa).

Catalysis depends on residues Asp88, Asp90, and Asp215.

It belongs to the eukaryotic-type primase small subunit family. In terms of assembly, heterodimer of a small subunit (PriS) and a large subunit (PriL). Requires Mg(2+) as cofactor. The cofactor is Mn(2+).

Catalytic subunit of DNA primase, an RNA polymerase that catalyzes the synthesis of short RNA molecules used as primers for DNA polymerase during DNA replication. The small subunit contains the primase catalytic core and has DNA synthesis activity on its own. Binding to the large subunit stabilizes and modulates the activity, increasing the rate of DNA synthesis while decreasing the length of the DNA fragments, and conferring RNA synthesis capability. The DNA polymerase activity may enable DNA primase to also catalyze primer extension after primer synthesis. May also play a role in DNA repair. This is DNA primase small subunit PriS from Pyrobaculum calidifontis (strain DSM 21063 / JCM 11548 / VA1).